The primary structure comprises 337 residues: Probable tyrosine--tRNA ligase, cytoplasmic (337 aa).

Residue Tyr-35 coordinates L-tyrosine. Residues 40 to 48 carry the 'HIGH' region motif; the sequence is ITGKPHIAY. L-tyrosine-binding residues include Tyr-162, Gln-166, Asp-169, and Gln-184. Residues 218–222 carry the 'KMSKS' region motif; the sequence is KMSSS.

The protein belongs to the class-I aminoacyl-tRNA synthetase family. In terms of assembly, homodimer.

Its subcellular location is the cytoplasm. The enzyme catalyses tRNA(Tyr) + L-tyrosine + ATP = L-tyrosyl-tRNA(Tyr) + AMP + diphosphate + H(+). The sequence is that of Probable tyrosine--tRNA ligase, cytoplasmic from Encephalitozoon cuniculi (strain GB-M1) (Microsporidian parasite).